The following is a 436-amino-acid chain: ATP-dependent protease ATPase subunit HslU (436 aa).

ATP-binding positions include Ile-19, 61-66 (GVGKTE), Asp-249, Glu-314, and Arg-386.

Belongs to the ClpX chaperone family. HslU subfamily. As to quaternary structure, a double ring-shaped homohexamer of HslV is capped on each side by a ring-shaped HslU homohexamer. The assembly of the HslU/HslV complex is dependent on binding of ATP.

It is found in the cytoplasm. Its function is as follows. ATPase subunit of a proteasome-like degradation complex; this subunit has chaperone activity. The binding of ATP and its subsequent hydrolysis by HslU are essential for unfolding of protein substrates subsequently hydrolyzed by HslV. HslU recognizes the N-terminal part of its protein substrates and unfolds these before they are guided to HslV for hydrolysis. This Bartonella bacilliformis (strain ATCC 35685 / KC583 / Herrer 020/F12,63) protein is ATP-dependent protease ATPase subunit HslU.